We begin with the raw amino-acid sequence, 189 residues long: UPF0301 protein CTA_0231 (189 aa).

It belongs to the UPF0301 (AlgH) family.

The sequence is that of UPF0301 protein CTA_0231 from Chlamydia trachomatis serovar A (strain ATCC VR-571B / DSM 19440 / HAR-13).